Here is a 442-residue protein sequence, read N- to C-terminus: Histidine--tRNA ligase (442 aa).

Belongs to the class-II aminoacyl-tRNA synthetase family. As to quaternary structure, homodimer.

The protein localises to the cytoplasm. The enzyme catalyses tRNA(His) + L-histidine + ATP = L-histidyl-tRNA(His) + AMP + diphosphate + H(+). This is Histidine--tRNA ligase from Helicobacter pylori (strain P12).